The chain runs to 86 residues: Small ribosomal subunit protein eS27 (86 aa).

The segment at 39–61 adopts a C4-type zinc-finger fold; the sequence is CQGCFNITTVFSHSQTVVVCPGC.

This sequence belongs to the eukaryotic ribosomal protein eS27 family. It depends on Zn(2+) as a cofactor.

This chain is Small ribosomal subunit protein eS27 (RPS27), found in Hordeum vulgare (Barley).